Here is a 273-residue protein sequence, read N- to C-terminus: Suppressor protein STM1 (273 aa).

The tract at residues 1 to 153 (MSNPFDLLGN…PKTAQLSLQD (153 aa)) is disordered. Residue S2 is modified to N-acetylserine. S32, S41, and S45 each carry phosphoserine; by MTOR. K46 is covalently cross-linked (Glycyl lysine isopeptide (Lys-Gly) (interchain with G-Cter in ubiquitin)). Residues S55 and S73 each carry the phosphoserine; by MTOR modification. Position 55 is a phosphoserine (S55). Basic and acidic residues-rich tracts occupy residues 60–77 (AIRDKTAGRRNNRSKDVT), 89–104 (RATDRHSRTGKTDTKK), and 111–124 (GDDKKELSAEKEAQ). S118 is subject to Phosphoserine. Residues K121 and K171 each participate in a glycyl lysine isopeptide (Lys-Gly) (interchain with G-Cter in ubiquitin) cross-link. Phosphothreonine; by MTOR is present on T181. K184 participates in a covalent cross-link: Glycyl lysine isopeptide (Lys-Gly) (interchain with G-Cter in ubiquitin). Position 218 is a phosphothreonine; by MTOR (T218). A disordered region spans residues 219–273 (RKNFGDRNNNSRNNFNNRRGGRGARKGNNTANATNSANTVQKNRNIDVSNLPSLA). 2 stretches are compositionally biased toward low complexity: residues 224–236 (DRNNNSRNNFNNR) and 244–257 (KGNNTANATNSANT). S229 carries the post-translational modification Phosphoserine. Over residues 258–273 (VQKNRNIDVSNLPSLA) the composition is skewed to polar residues.

It belongs to the SERBP1-HABP4 family. In terms of assembly, associates with mature 80S ribosomes. Binds to the head domain of the 40S ribosomal subunit and prevents mRNA binding by inserting its alpha-helix domain towards the mRNA entry tunnel at the decoding site, where it blocks the binding of tRNA and mRNA at the A- and P-sites. Interacts with EFT1; interaction sequesters EFT1 at the A-site of the ribosome, thereby blocking the interaction sites of the mRNA-tRNA complex, promoting ribosome stabilization and hibernation. Interacts with CDC13. Associates with the telomere-proximal Y' element. In terms of processing, phosphorylation by TORC1 upon nutrient replenishment inhibits STM1 and causes its release from dormant ribosomes.

Its subcellular location is the cytoplasm. The protein localises to the nucleus. It localises to the perinuclear region. Its function is as follows. Ribosome preservation factor that protect a small pool of nontranslating, vacant ribosomes in cells under nutrient starvation conditions. Under nutrient-limiting conditions, cells reduce ribosome biogenesis and degrade ribosomes via autophagy (ribophagy) or proteasomal degradation. To avoid excessive degradation during starvation, STM1 binds to and protects 80S ribosomes from proteasomal degradation. Under nutrient-sufficient conditions, TORC1 phosphorylates and inhibits STM1 to prevent formation of dormant 80S ribosomes. Acts as an inhibitor of mRNA translation by promoting ribosome hibernation: clamps the two ribosomal subunits, thereby preventing their dissociation, and inhibits translation by excluding mRNA-binding. Acts via its association with eEF2 (EFT1), promoting ribosome stabilization and storage in an inactive state. May also repress translation by preventing association of eEF3 (YEF3 and HEF3) with ribosomes. Binds specifically G4 quadruplex (these are four-stranded right-handed helices, stabilized by guanine base quartets) and purine motif triplex (characterized by a third, antiparallel purine-rich DNA strand located within the major groove of a homopurine stretch of duplex DNA) nucleic acid structures. These structures may be present at telomeres or in rRNAs. Acts with CDC13 to control telomere length homeostasis. Involved in the control of the apoptosis-like cell death. This Saccharomyces cerevisiae (strain ATCC 204508 / S288c) (Baker's yeast) protein is Suppressor protein STM1.